The chain runs to 262 residues: Hydroxyethylthiazole kinase (262 aa).

Methionine 44 lines the substrate pocket. Arginine 118 and threonine 166 together coordinate ATP. Residue glycine 193 participates in substrate binding.

This sequence belongs to the Thz kinase family. It depends on Mg(2+) as a cofactor.

It catalyses the reaction 5-(2-hydroxyethyl)-4-methylthiazole + ATP = 4-methyl-5-(2-phosphooxyethyl)-thiazole + ADP + H(+). It functions in the pathway cofactor biosynthesis; thiamine diphosphate biosynthesis; 4-methyl-5-(2-phosphoethyl)-thiazole from 5-(2-hydroxyethyl)-4-methylthiazole: step 1/1. Its function is as follows. Catalyzes the phosphorylation of the hydroxyl group of 4-methyl-5-beta-hydroxyethylthiazole (THZ). The protein is Hydroxyethylthiazole kinase of Chlamydia caviae (strain ATCC VR-813 / DSM 19441 / 03DC25 / GPIC) (Chlamydophila caviae).